A 311-amino-acid chain; its full sequence is Putative HTH-type transcriptional regulatory protein MTH_967 (311 aa).

The 59-residue stretch at 134 to 192 folds into the HTH cro/C1-type domain; the sequence is LREVREEYNLSLKDLADLAHVSRKTIYKYENGLARASAETAMILEEILNIRITLSIDIF. Positions 145-164 form a DNA-binding region, H-T-H motif; it reads LKDLADLAHVSRKTIYKYEN.

This is Putative HTH-type transcriptional regulatory protein MTH_967 from Methanothermobacter thermautotrophicus (strain ATCC 29096 / DSM 1053 / JCM 10044 / NBRC 100330 / Delta H) (Methanobacterium thermoautotrophicum).